The chain runs to 457 residues: Transcription factor CP2-like protein 1 (457 aa).

Positions 1–52 are mediate transcriptional repression; sequence MLFWHTQPEHYNQHNSGSYLRDVLALPIFKQEEPQLSPENEARLPPLQYVLC. The Grh/CP2 DB domain maps to 43–280; the sequence is RLPPLQYVLC…PSPSYNGSPN (238 aa). 2 disordered regions span residues 219–245 and 271–301; these read KPKGADRKQETDREKMEKRTAQEKEKY and PSPSYNGSPNSFGLGEGNASPTHPVEALPVG. Residues 221–245 are compositionally biased toward basic and acidic residues; it reads KGADRKQETDREKMEKRTAQEKEKY. The tract at residues 261–365 is SAM2-like domain; that stretch reads PDVAYQVNSA…IRLFNAIKGR (105 aa). A compositionally biased stretch (polar residues) spans 271–281; sequence PSPSYNGSPNS.

This sequence belongs to the grh/CP2 family. CP2 subfamily. In terms of assembly, forms homohexamers via its SAM-like domain. Interacts with MTA1; which is indispensable for TFCP2L1-mediated self-renewal-promoting effect and endoderm-inhibiting action.

The protein resides in the nucleus. Transcription factor that facilitates establishment and maintenance of pluripotency in embryonic stem cells (ESCs). With KLF2, acts as the major effector of self-renewal that mediates induction of pluripotency downstream of LIF/STAT3 and Wnt/beta-catenin signaling. Required for normal duct development in the salivary gland and kidney. Coordinates the development of the kidney collecting ducts intercalated (IC) and principal (PC) cells, which regulate acid-base and salt-water homeostasis, respectively. Regulates the expression of IC genes including subunits B1 and D2 of the V-ATPase complex, OXGR1, CA12, SLC4A1, AQP6 and IC-specific transcription factor FOXI1. Also regulates the expression of JAG1 and subsequent notch signaling in the collecting duct. JAG1 initiates notch signaling in PCs but inhibits notch signaling in ICs. Acts as a transcriptional suppressor that may suppress UBP1-mediated transcriptional activation. Modulates the placental expression of CYP11A1. The polypeptide is Transcription factor CP2-like protein 1 (TFCP2L1) (Pongo abelii (Sumatran orangutan)).